The chain runs to 612 residues: BTB/POZ domain-containing protein 9 (612 aa).

The BTB domain maps to 36–104; the sequence is GDVTFVVEKK…IYTGRATLTD (69 aa). Residues 142–240 form the BACK domain; that stretch reads VCMTFDVASL…SLTELLNVVR (99 aa). Positions 559–612 are disordered; that stretch reads QQSTQKEDSSEEPGTGDLSTPSQQLDPHAPRAPSASSLPPSPGPNLHSPNQQNQ. Positions 589–612 are enriched in low complexity; the sequence is RAPSASSLPPSPGPNLHSPNQQNQ.

Detected throughout the gray matter of the spinal cord including the motor neurons (at protein level). In the brain, detected in the neurons of the hippocampus and in the Purkinje cells of the cerebellum (at protein level). Also detected in the terospenial cortex, bed nucleus of the stria terminalis (BST) and the ventrolateral thalamus (VL) (at protein level).

This chain is BTB/POZ domain-containing protein 9 (Btbd9), found in Rattus norvegicus (Rat).